A 609-amino-acid polypeptide reads, in one-letter code: Granule-bound starch synthase 1, chloroplastic/amyloplastic (609 aa).

The transit peptide at 1-77 directs the protein to the chloroplast; it reads MSALTTSQLA…SRRFPSVVVY (77 aa). The segment at 29–67 is disordered; the sequence is RHGFQGLKPRSPAGGDATSLSVTTSARATPKQQRSVQRG. Residues 46–66 are compositionally biased toward polar residues; that stretch reads TSLSVTTSARATPKQQRSVQR. Residue Lys-97 coordinates ADP-alpha-D-glucose. Residues Gly-100, Arg-408, Lys-413, Lys-462, and Gln-493 each coordinate ADP. Residues Cys-337 and Cys-529 are joined by a disulfide bond.

It belongs to the glycosyltransferase 1 family. Bacterial/plant glycogen synthase subfamily.

It localises to the plastid. The protein resides in the chloroplast. The protein localises to the amyloplast. The enzyme catalyses an NDP-alpha-D-glucose + [(1-&gt;4)-alpha-D-glucosyl](n) = [(1-&gt;4)-alpha-D-glucosyl](n+1) + a ribonucleoside 5'-diphosphate + H(+). Its pathway is glycan biosynthesis; starch biosynthesis. Its function is as follows. Required for the synthesis of amylose in endosperm. In Oryza sativa subsp. indica (Rice), this protein is Granule-bound starch synthase 1, chloroplastic/amyloplastic (WAXY).